We begin with the raw amino-acid sequence, 304 residues long: Murein tetrapeptide carboxypeptidase (304 aa).

Ser106 acts as the Nucleophile in catalysis. Residues Glu200 and His270 each act as charge relay system in the active site.

It belongs to the peptidase S66 family.

The protein resides in the cytoplasm. It catalyses the reaction N-acetyl-D-glucosaminyl-N-acetylmuramoyl-L-alanyl-meso-2,6-diaminoheptanedioyl-D-alanine + H2O = N-acetyl-D-glucosaminyl-N-acetylmuramoyl-L-alanyl-meso-2,6-diaminoheptanedioate + D-alanine. The protein operates within cell wall biogenesis; peptidoglycan recycling. Its activity is regulated as follows. Inhibited by beta-lactams containing a D-amino acid side chain. Its function is as follows. Releases the terminal D-alanine residue from the cytoplasmic tetrapeptide recycling product L-Ala-gamma-D-Glu-meso-Dap-D-Ala. To a lesser extent, can also cleave D-Ala from murein derivatives containing the tetrapeptide, i.e. MurNAc-tetrapeptide, UDP-MurNAc-tetrapeptide, GlcNAc-MurNAc-tetrapeptide, and GlcNAc-anhMurNAc-tetrapeptide. Does not act on murein sacculi or cross-linked muropeptides. The tripeptides produced by the LcdA reaction can then be reused as peptidoglycan building blocks; LcdA is thereby involved in murein recycling. Is also essential for viability during stationary phase. The protein is Murein tetrapeptide carboxypeptidase (ldcA) of Escherichia coli (strain K12).